A 317-amino-acid polypeptide reads, in one-letter code: 2,3-dihydroxyphenylpropionate/2,3-dihydroxicinnamic acid 1,2-dioxygenase (317 aa).

The Proton donor role is filled by His115. His179 functions as the Proton acceptor in the catalytic mechanism.

This sequence belongs to the LigB/MhpB extradiol dioxygenase family. In terms of assembly, homotetramer. Fe(2+) is required as a cofactor.

It catalyses the reaction 3-(2,3-dihydroxyphenyl)propanoate + O2 = (2Z,4E)-2-hydroxy-6-oxonona-2,4-dienedioate + H(+). The catalysed reaction is (2E)-3-(2,3-dihydroxyphenyl)prop-2-enoate + O2 = (2Z,4E,7E)-2-hydroxy-6-oxonona-2,4,7-trienedioate + H(+). Its pathway is aromatic compound metabolism; 3-phenylpropanoate degradation. Functionally, catalyzes the non-heme iron(II)-dependent oxidative cleavage of 2,3-dihydroxyphenylpropionic acid and 2,3-dihydroxicinnamic acid into 2-hydroxy-6-ketononadienedioate and 2-hydroxy-6-ketononatrienedioate, respectively. The polypeptide is 2,3-dihydroxyphenylpropionate/2,3-dihydroxicinnamic acid 1,2-dioxygenase (Photorhabdus laumondii subsp. laumondii (strain DSM 15139 / CIP 105565 / TT01) (Photorhabdus luminescens subsp. laumondii)).